The sequence spans 232 residues: Large ribosomal subunit protein uL1 (232 aa).

It belongs to the universal ribosomal protein uL1 family. Part of the 50S ribosomal subunit.

In terms of biological role, binds directly to 23S rRNA. The L1 stalk is quite mobile in the ribosome, and is involved in E site tRNA release. Functionally, protein L1 is also a translational repressor protein, it controls the translation of the L11 operon by binding to its mRNA. The chain is Large ribosomal subunit protein uL1 from Methylorubrum populi (strain ATCC BAA-705 / NCIMB 13946 / BJ001) (Methylobacterium populi).